The sequence spans 100 residues: Large ribosomal subunit protein uL23 (100 aa).

It belongs to the universal ribosomal protein uL23 family. In terms of assembly, part of the 50S ribosomal subunit. Contacts protein L29, and trigger factor when it is bound to the ribosome.

One of the early assembly proteins it binds 23S rRNA. One of the proteins that surrounds the polypeptide exit tunnel on the outside of the ribosome. Forms the main docking site for trigger factor binding to the ribosome. The sequence is that of Large ribosomal subunit protein uL23 from Mycobacterium leprae (strain Br4923).